Consider the following 307-residue polypeptide: Junctional adhesion molecule 2A (307 aa).

The N-terminal stretch at 1-18 is a signal peptide; it reads MLVCVSLLILIHSVPVSP. Positions 19–112 constitute an Ig-like V-type domain; it reads VTVSSRNPKV…EVSAPSDSIS (94 aa). Residues 19–226 lie on the Extracellular side of the membrane; sequence VTVSSRNPKV…FQTHDLNVAA (208 aa). Intrachain disulfides connect cysteine 40-cysteine 102 and cysteine 147-cysteine 197. The Ig-like C2-type domain maps to 126 to 225; the sequence is PQTPSCDVPS…TFQTHDLNVA (100 aa). Residues 227 to 247 form a helical membrane-spanning segment; sequence VVSAVVLVCVILFLCAFGVCL. Residues 248–307 are Cytoplasmic-facing; it reads AHRQGYFSRHRGRSFWIPHCHGVTHISSQNLNPSEHTQHSGYSHPPKEPQDFKHTQSFML. Polar residues predominate over residues 278 to 288; that stretch reads LNPSEHTQHSG. Residues 278 to 307 form a disordered region; it reads LNPSEHTQHSGYSHPPKEPQDFKHTQSFML. Residues 292–301 show a composition bias toward basic and acidic residues; the sequence is PPKEPQDFKH.

Belongs to the immunoglobulin superfamily.

The protein resides in the cell membrane. Its subcellular location is the cell junction. The protein localises to the tight junction. Junctional adhesion protein that mediates heterotypic cell-cell interactions to regulate different cellular processes. During myogenesis, it is involved in myocyte fusion through the binding of jam3b on neighboring myocytes. This is Junctional adhesion molecule 2A (jam2a) from Danio rerio (Zebrafish).